Consider the following 494-residue polypeptide: Ketol-acid reductoisomerase (NADP(+)) (494 aa).

In terms of domain architecture, KARI N-terminal Rossmann spans 14-208 (LDQLGRCRFM…GGHRAGCLES (195 aa)). NADP(+) contacts are provided by residues 45-48 (CGAQ), Arg-68, Arg-76, Ser-78, and 108-110 (DKQ). His-132 is a catalytic residue. Gly-158 contributes to the NADP(+) binding site. KARI C-terminal knotted domains follow at residues 209–344 (SFVA…NYPD) and 345–487 (SSLE…MTDM). Mg(2+)-binding residues include Asp-217, Glu-221, Glu-389, and Glu-393. Position 414 (Ser-414) interacts with substrate.

Belongs to the ketol-acid reductoisomerase family. Mg(2+) is required as a cofactor.

It catalyses the reaction (2R)-2,3-dihydroxy-3-methylbutanoate + NADP(+) = (2S)-2-acetolactate + NADPH + H(+). It carries out the reaction (2R,3R)-2,3-dihydroxy-3-methylpentanoate + NADP(+) = (S)-2-ethyl-2-hydroxy-3-oxobutanoate + NADPH + H(+). It functions in the pathway amino-acid biosynthesis; L-isoleucine biosynthesis; L-isoleucine from 2-oxobutanoate: step 2/4. Its pathway is amino-acid biosynthesis; L-valine biosynthesis; L-valine from pyruvate: step 2/4. Involved in the biosynthesis of branched-chain amino acids (BCAA). Catalyzes an alkyl-migration followed by a ketol-acid reduction of (S)-2-acetolactate (S2AL) to yield (R)-2,3-dihydroxy-isovalerate. In the isomerase reaction, S2AL is rearranged via a Mg-dependent methyl migration to produce 3-hydroxy-3-methyl-2-ketobutyrate (HMKB). In the reductase reaction, this 2-ketoacid undergoes a metal-dependent reduction by NADPH to yield (R)-2,3-dihydroxy-isovalerate. The polypeptide is Ketol-acid reductoisomerase (NADP(+)) (Aliivibrio salmonicida (strain LFI1238) (Vibrio salmonicida (strain LFI1238))).